The following is a 407-amino-acid chain: Argininosuccinate synthase (407 aa).

Residues 16 to 24 (AYSGGLDTS) and Ala44 contribute to the ATP site. 2 residues coordinate L-citrulline: Tyr96 and Ser101. Residue Gly126 participates in ATP binding. L-aspartate contacts are provided by Thr128, Asn132, and Asp133. Asn132 provides a ligand contact to L-citrulline. Residues Arg136, Ser185, Ser194, Glu270, and Tyr282 each contribute to the L-citrulline site.

It belongs to the argininosuccinate synthase family. Type 1 subfamily. In terms of assembly, homotetramer.

The protein localises to the cytoplasm. The enzyme catalyses L-citrulline + L-aspartate + ATP = 2-(N(omega)-L-arginino)succinate + AMP + diphosphate + H(+). It functions in the pathway amino-acid biosynthesis; L-arginine biosynthesis; L-arginine from L-ornithine and carbamoyl phosphate: step 2/3. The protein is Argininosuccinate synthase of Shewanella sediminis (strain HAW-EB3).